The following is a 500-amino-acid chain: Probable serine carboxypeptidase CPVL (500 aa).

A signal peptide spans 1-23; the sequence is MKVSLSFLLTILIVIITIKVNLS. Asn-110 and Asn-161 each carry an N-linked (GlcNAc...) asparagine glycan. Ser-233 is a catalytic residue. Residues Asn-333 and Asn-360 are each glycosylated (N-linked (GlcNAc...) asparagine). Residues Asp-414 and His-474 contribute to the active site.

Belongs to the peptidase S10 family.

The protein localises to the secreted. May be involved in the digestion of phagocytosed particles in the lysosome, participation in an inflammatory protease cascade, and trimming of peptides for antigen presentation. This Dictyostelium discoideum (Social amoeba) protein is Probable serine carboxypeptidase CPVL (cpvl).